The following is a 260-amino-acid chain: UPF0294 protein YE0917 (260 aa).

It belongs to the UPF0294 family.

The protein resides in the cytoplasm. In Yersinia enterocolitica serotype O:8 / biotype 1B (strain NCTC 13174 / 8081), this protein is UPF0294 protein YE0917.